The chain runs to 171 residues: Small ribosomal subunit protein uS5 (171 aa).

The S5 DRBM domain occupies 16–79 (LVERLVTVDR…EAAKRNMITV (64 aa)).

The protein belongs to the universal ribosomal protein uS5 family. In terms of assembly, part of the 30S ribosomal subunit. Contacts proteins S4 and S8.

With S4 and S12 plays an important role in translational accuracy. Functionally, located at the back of the 30S subunit body where it stabilizes the conformation of the head with respect to the body. The polypeptide is Small ribosomal subunit protein uS5 (Psychrobacter arcticus (strain DSM 17307 / VKM B-2377 / 273-4)).